The sequence spans 176 residues: Ribosome maturation factor RimM (176 aa).

Positions 93–170 (DGEYYHADLI…ELPTEIEGDT (78 aa)) constitute a PRC barrel domain.

It belongs to the RimM family. Binds ribosomal protein uS19.

The protein localises to the cytoplasm. Functionally, an accessory protein needed during the final step in the assembly of 30S ribosomal subunit, possibly for assembly of the head region. Essential for efficient processing of 16S rRNA. May be needed both before and after RbfA during the maturation of 16S rRNA. It has affinity for free ribosomal 30S subunits but not for 70S ribosomes. The sequence is that of Ribosome maturation factor RimM from Rhodopseudomonas palustris (strain BisB5).